Reading from the N-terminus, the 507-residue chain is MELIPSFSMETWVLLATSLVLLYIYGTYSYGLFKKLGIPGPRPVPYFGSTMAYHKGIPEFDNQCFKKYGKMWGFYEGRQPMLAITDPDIIKTVLVKECYSVFTNRRIFGPMGIMKYAISLAWDEQWKRIRTLLSPAFTSGKLKEMFPIIGQYGDMLVRNLRKEAEKGNPVNMKDMFGAYSMDVITGTAFGVNIDSLNNPHDPFVEHSKNLLRFRPFDPFILSIILFPFLNPVFEILNITLFPKSTVDFFTKSVKKIKESRLTDKQMNRVDLLQLMINSQNSKEIDNHKALSDIELVAQSTIFIFGGYETTSSTLSFIIYELTTHPHVQQKLQEEIDATFPNKAPPTYDALVQMEYLDMVVNETLRMFPIAGRLERVCKKDVEIHGVTIPKGTTVLVPLFVLHNNPELWPEPEEFRPERFSKNNKDSINPYVYLPFGTGPRNCLGMRFAIMNIKLALVRILQNFSFKPCKETQIPLKLYTQGLTQPEQPVILKVVPRGLGPQVEPDFL.

Cys-442 contributes to the heme binding site.

It belongs to the cytochrome P450 family. Heme is required as a cofactor.

It is found in the endoplasmic reticulum membrane. Its subcellular location is the microsome membrane. The catalysed reaction is an organic molecule + reduced [NADPH--hemoprotein reductase] + O2 = an alcohol + oxidized [NADPH--hemoprotein reductase] + H2O + H(+). Cytochromes P450 are a group of heme-thiolate monooxygenases. In liver microsomes, this enzyme is involved in an NADPH-dependent electron transport pathway. It oxidizes a variety of structurally unrelated compounds, including steroids, fatty acids, and xenobiotics. The polypeptide is Cytochrome P450 3A28 (CYP3A28) (Bos taurus (Bovine)).